A 316-amino-acid chain; its full sequence is MRTDWTRDEIAALIALPFPELMFRAQSVHRARFDPTEIQISTLLSIKTGGCPEDCAYCPQSAKHEDGGVKASRLMAVEAVLKEARAARDAGAARFCMGAAWRSPKDHDLETVCAMVEGVKSLGMETCVTLGMLDDRQAHRLREAGLDYYNHNLDTSPEHYGSIISTRTYQERLDTLAHVRDAGINVCCGGIVGMGENDDDRAGLIASLASLPRHPESVPINLLVRVAGTPLAGADPVDPIDFVRIIAAARIAMPASRVRLAAGREDMTDEAQTLCFLAGANSIFYGEKLLTTPNPEASRDARLLARLGMHTSLAQA.

Residues 36-264 (TEIQISTLLS…ASRVRLAAGR (229 aa)) enclose the Radical SAM core domain. 3 residues coordinate [4Fe-4S] cluster: C51, C55, and C58. [2Fe-2S] cluster contacts are provided by C96, C127, C187, and R259.

Belongs to the radical SAM superfamily. Biotin synthase family. In terms of assembly, homodimer. [4Fe-4S] cluster is required as a cofactor. Requires [2Fe-2S] cluster as cofactor.

It carries out the reaction (4R,5S)-dethiobiotin + (sulfur carrier)-SH + 2 reduced [2Fe-2S]-[ferredoxin] + 2 S-adenosyl-L-methionine = (sulfur carrier)-H + biotin + 2 5'-deoxyadenosine + 2 L-methionine + 2 oxidized [2Fe-2S]-[ferredoxin]. Its pathway is cofactor biosynthesis; biotin biosynthesis; biotin from 7,8-diaminononanoate: step 2/2. Catalyzes the conversion of dethiobiotin (DTB) to biotin by the insertion of a sulfur atom into dethiobiotin via a radical-based mechanism. This is Biotin synthase from Gluconacetobacter diazotrophicus (strain ATCC 49037 / DSM 5601 / CCUG 37298 / CIP 103539 / LMG 7603 / PAl5).